The chain runs to 702 residues: Elongation factor G 1 (702 aa).

The tr-type G domain occupies 8–290 (ERYRNIGISA…AVIDFLPSPV (283 aa)). GTP-binding positions include 17 to 24 (AHIDAGKT), 88 to 92 (DTPGH), and 142 to 145 (NKMD).

It belongs to the TRAFAC class translation factor GTPase superfamily. Classic translation factor GTPase family. EF-G/EF-2 subfamily.

It localises to the cytoplasm. Its function is as follows. Catalyzes the GTP-dependent ribosomal translocation step during translation elongation. During this step, the ribosome changes from the pre-translocational (PRE) to the post-translocational (POST) state as the newly formed A-site-bound peptidyl-tRNA and P-site-bound deacylated tRNA move to the P and E sites, respectively. Catalyzes the coordinated movement of the two tRNA molecules, the mRNA and conformational changes in the ribosome. The chain is Elongation factor G 1 from Cupriavidus pinatubonensis (strain JMP 134 / LMG 1197) (Cupriavidus necator (strain JMP 134)).